Consider the following 663-residue polypeptide: Cytochrome bo(3) ubiquinol oxidase subunit 1 (663 aa).

Over 1 to 16 (MFGKLSLDAVPFHEPI) the chain is Periplasmic. Residues 17-35 (VMVTIAGIILGGLALVGLI) traverse the membrane as a helical segment. The Cytoplasmic portion of the chain corresponds to 36–52 (TYFGKWTYLWKEWLTSV). A helical transmembrane segment spans residues 53-80 (DHKRLGIMYIIVAIVMLLRGFADAIMMR). 2 residues coordinate ubiquinone-8: R71 and D75. Residues 81–95 (SQQALASAGEAGFLP) are Periplasmic-facing. The helical transmembrane segment at 96 to 132 (PHHYDQIFTAHGVIMIFFVAMPFVIGLMNLVVPLQIG) threads the bilayer. H98 serves as a coordination point for ubiquinone-8. H106 contacts heme b. Residues 133-137 (ARDVA) lie on the Cytoplasmic side of the membrane. The helical transmembrane segment at 138–161 (FPFLNNLSFWFTVVGVILVNVSLG) threads the bilayer. The Periplasmic portion of the chain corresponds to 162–184 (VGEFAQTGWLAYPPLSGIEYSPG). Heme b is bound at residue W170. A helical transmembrane segment spans residues 185 to 215 (VGVDYWIWSLQLSGIGTTLTGINFFVTILKM). Residues 216–224 (RAPGMTMFK) lie on the Cytoplasmic side of the membrane. Residues 225–260 (MPVFTWASLCANVLIIASFPILTVTVALLTLDRYLG) form a helical membrane-spanning segment. The Periplasmic portion of the chain corresponds to 261–270 (THFFTNDMGG). Residues 271-307 (NMMMYINLIWAWGHPEVYILILPVFGVFSEIAATFSR) traverse the membrane as a helical segment. H284 is a Cu(2+) binding site. Residues 284–288 (HPEVY) constitute a cross-link (1'-histidyl-3'-tyrosine (His-Tyr)). Y288 is a Fe(II)-heme o binding site. The Cytoplasmic portion of the chain corresponds to 308 to 311 (KRLF). The chain crosses the membrane as a helical span at residues 312-326 (GYTSLVWATVCITVL). Over 327–340 (SFIVWLHHFFTMGA) the chain is Periplasmic. H333 and H334 together coordinate Cu(2+). A helical transmembrane segment spans residues 341 to 369 (GANVNAFFGITTMIIAIPTGVKIFNWLFT). At 370–377 (MYQGRIVF) the chain is on the cytoplasmic side. The helical transmembrane segment at 378 to 409 (HSAMLWTIGFIVTFSVGGMTGVLLAVPGADFV) threads the bilayer. Residues 410–412 (LHN) are Periplasmic-facing. Residues H411 and H419 each contribute to the Fe(II)-heme o site. Residues 413–445 (SLFLIAHFHNVIIGGVVFGCFAGMTYWWPKAFG) traverse the membrane as a helical segment. H421 lines the heme b pocket. At 446-448 (FKL) the chain is on the cytoplasmic side. The helical transmembrane segment at 449-477 (NETWGKRAFWFWIIGFFVAFMPLYALGFM) threads the bilayer. The Periplasmic segment spans residues 478–489 (GMTRRLSQQIDP). Positions 481 and 482 each coordinate heme b. A helical transmembrane segment spans residues 490-521 (QFHTMLMIAASGAVLIALGILCLVIQMYVSIR). Residues 522–587 (DRDQNRDLTG…DHYEEIHMPK (66 aa)) are Cytoplasmic-facing. Residues 588–606 (NSGAGIVIAAFSTIFGFAM) form a helical membrane-spanning segment. The Periplasmic portion of the chain corresponds to 607-613 (IWHIWWL). Residues 614 to 632 (AIVGFAGMIITWIVKSFDE) form a helical membrane-spanning segment. Over 633–663 (DVDYYVPVAEIEKLENQHFDEITKAGLKNGN) the chain is Cytoplasmic.

It belongs to the heme-copper respiratory oxidase family. As to quaternary structure, the cytochrome bo(3) ubiquinol oxidase complex is a heterooctamer of two A chains, two B chains, two C chains and two D chains. It depends on Cu(2+) as a cofactor. Requires heme b as cofactor. Fe(II)-heme o is required as a cofactor.

It localises to the cell inner membrane. It carries out the reaction 2 a ubiquinol + O2 + n H(+)(in) = 2 a ubiquinone + 2 H2O + n H(+)(out). Cytochrome bo(3) ubiquinol oxidase is the terminal enzyme in the aerobic respiratory chain of E.coli that predominates when cells are grown at high aeration. Catalyzes the four-electron reduction of O2 to water, using a ubiquinol as a membrane soluble electron donor for molecular oxygen reduction; ubiquinol-8 is the natural substrate for E.coli. Has proton pump activity across the membrane in addition to electron transfer, pumping 2 protons/electron and generating a proton motive force. All the redox centers of this enzyme complex are located within the largest subunit, subunit I. Protons are probably pumped via D- and K- channels found in this subunit. This Escherichia coli O157:H7 protein is Cytochrome bo(3) ubiquinol oxidase subunit 1 (cyoB).